A 208-amino-acid chain; its full sequence is Thymidylate kinase (208 aa).

Gly10–Thr17 provides a ligand contact to ATP.

It belongs to the thymidylate kinase family.

The catalysed reaction is dTMP + ATP = dTDP + ADP. Phosphorylation of dTMP to form dTDP in both de novo and salvage pathways of dTTP synthesis. The chain is Thymidylate kinase from Listeria monocytogenes serotype 4b (strain CLIP80459).